The chain runs to 252 residues: Hydroxyacylglutathione hydrolase (252 aa).

Zn(2+) is bound by residues H54, H56, D58, H59, H111, D130, and H170.

It belongs to the metallo-beta-lactamase superfamily. Glyoxalase II family. In terms of assembly, monomer. Zn(2+) is required as a cofactor.

The catalysed reaction is an S-(2-hydroxyacyl)glutathione + H2O = a 2-hydroxy carboxylate + glutathione + H(+). The protein operates within secondary metabolite metabolism; methylglyoxal degradation; (R)-lactate from methylglyoxal: step 2/2. In terms of biological role, thiolesterase that catalyzes the hydrolysis of S-D-lactoyl-glutathione to form glutathione and D-lactic acid. This chain is Hydroxyacylglutathione hydrolase, found in Francisella philomiragia subsp. philomiragia (strain ATCC 25017 / CCUG 19701 / FSC 153 / O#319-036).